Here is a 196-residue protein sequence, read N- to C-terminus: Putative lipopolysaccharide biosynthesis O-acetyl transferase WbbJ (196 aa).

It belongs to the transferase hexapeptide repeat family.

Its pathway is bacterial outer membrane biogenesis; lipopolysaccharide biosynthesis. Putative O-acetyltransferase that transfers an O-acetyl group to the O antigen. The sequence is that of Putative lipopolysaccharide biosynthesis O-acetyl transferase WbbJ (wbbJ) from Escherichia coli (strain K12).